We begin with the raw amino-acid sequence, 201 residues long: FMN-dependent NADH:quinone oxidoreductase (201 aa).

Residues serine 10, 16-18 (SQS), 96-99 (MYNF), and 140-143 (SRGG) contribute to the FMN site.

Belongs to the azoreductase type 1 family. Homodimer. FMN serves as cofactor.

The catalysed reaction is 2 a quinone + NADH + H(+) = 2 a 1,4-benzosemiquinone + NAD(+). The enzyme catalyses N,N-dimethyl-1,4-phenylenediamine + anthranilate + 2 NAD(+) = 2-(4-dimethylaminophenyl)diazenylbenzoate + 2 NADH + 2 H(+). Quinone reductase that provides resistance to thiol-specific stress caused by electrophilic quinones. In terms of biological role, also exhibits azoreductase activity. Catalyzes the reductive cleavage of the azo bond in aromatic azo compounds to the corresponding amines. The protein is FMN-dependent NADH:quinone oxidoreductase of Salmonella paratyphi A (strain ATCC 9150 / SARB42).